We begin with the raw amino-acid sequence, 244 residues long: Probable ABC transporter ATP-binding protein in ycf23-apcF intergenic region (244 aa).

The 233-residue stretch at 9–241 folds into the ABC transporter domain; sequence LEINNLTVSY…KLSTLFGEHI (233 aa). 41-48 contacts ATP; sequence GPNGAGKS.

The protein belongs to the ABC transporter superfamily.

The protein localises to the plastid. It is found in the cyanelle. In Cyanophora paradoxa, this protein is Probable ABC transporter ATP-binding protein in ycf23-apcF intergenic region.